Reading from the N-terminus, the 121-residue chain is NAD(P)H-quinone oxidoreductase subunit M (121 aa).

It belongs to the complex I NdhM subunit family. In terms of assembly, NDH-1 can be composed of about 15 different subunits; different subcomplexes with different compositions have been identified which probably have different functions.

The protein resides in the cellular thylakoid membrane. It catalyses the reaction a plastoquinone + NADH + (n+1) H(+)(in) = a plastoquinol + NAD(+) + n H(+)(out). The catalysed reaction is a plastoquinone + NADPH + (n+1) H(+)(in) = a plastoquinol + NADP(+) + n H(+)(out). Its function is as follows. NDH-1 shuttles electrons from an unknown electron donor, via FMN and iron-sulfur (Fe-S) centers, to quinones in the respiratory and/or the photosynthetic chain. The immediate electron acceptor for the enzyme in this species is believed to be plastoquinone. Couples the redox reaction to proton translocation, and thus conserves the redox energy in a proton gradient. Cyanobacterial NDH-1 also plays a role in inorganic carbon-concentration. The polypeptide is NAD(P)H-quinone oxidoreductase subunit M (Nostoc punctiforme (strain ATCC 29133 / PCC 73102)).